The sequence spans 174 residues: uncharacterized protein (174 aa).

Residues 153–174 form a disordered region; sequence RSGNHSAGNVHPASPMIKVQGG.

This is an uncharacterized protein from Sinorhizobium fredii (strain NBRC 101917 / NGR234).